Reading from the N-terminus, the 121-residue chain is MAEHNLLGKAGEDAAVDYLERHDYVIRHRNWRKGHFELDIVAAKNGELIIVEVKTRSDTDFALPQDAVTPQKIRRTVIAADTYIKLFQIDEPVRFDIITVIGKTGNFRIEHIKEAFYPPLF.

This sequence belongs to the UPF0102 family.

This is UPF0102 protein BF0706 from Bacteroides fragilis (strain YCH46).